A 206-amino-acid chain; its full sequence is Small ribosomal subunit protein uS4 (206 aa).

Positions 96-156 (TRLDNVVYRM…EKSRTQARIK (61 aa)) constitute an S4 RNA-binding domain.

This sequence belongs to the universal ribosomal protein uS4 family. In terms of assembly, part of the 30S ribosomal subunit. Contacts protein S5. The interaction surface between S4 and S5 is involved in control of translational fidelity.

Functionally, one of the primary rRNA binding proteins, it binds directly to 16S rRNA where it nucleates assembly of the body of the 30S subunit. With S5 and S12 plays an important role in translational accuracy. This Shewanella sp. (strain MR-4) protein is Small ribosomal subunit protein uS4.